Here is a 986-residue protein sequence, read N- to C-terminus: Vacuolar membrane protease (986 aa).

Residues 1–20 are Cytoplasmic-facing; the sequence is MATPRAQKFNPIAFTPGPVT. Residues 21-41 traverse the membrane as a helical segment; sequence LITTIVYLALLIPILVISLVV. Residues 42–392 lie on the Vacuolar side of the membrane; the sequence is PPAPETSPEG…AFAVFRLHTL (351 aa). Residues N53, N116, and N119 are each glycosylated (N-linked (GlcNAc...) asparagine). Zn(2+)-binding residues include H175 and D187. The active-site Proton acceptor is E221. E222 is a Zn(2+) binding site. Residue N238 is glycosylated (N-linked (GlcNAc...) asparagine). Zn(2+) contacts are provided by E247 and H320. A helical transmembrane segment spans residues 393-413; the sequence is FALSVTLLIVAPLVIFITAIV. Topologically, residues 414-447 are cytoplasmic; that stretch reads LSKTDRMYLFSMSKSLGGTDERVSLRGLRGLFRT. A helical transmembrane segment spans residues 448–468; that stretch reads PIILAVATVIPIGLAYLLEKV. The Vacuolar segment spans residues 469–477; that stretch reads NPYIVHSSQ. The chain crosses the membrane as a helical span at residues 478-498; the sequence is FSVWSMMISVWIFLAWFLACA. Residues 499–509 are Cytoplasmic-facing; the sequence is ADFFRPSALHR. Residues 510–530 traverse the membrane as a helical segment; sequence AYSYTWIFIATWVMLVINTVY. The Vacuolar portion of the chain corresponds to 531 to 534; it reads ANQK. Residues 535–555 traverse the membrane as a helical segment; sequence GIAAGYFVFFYFSGSFLATWV. Topologically, residues 556 to 665 are cytoplasmic; it reads SYLELFALPR…WSWTLPRWTW (110 aa). The segment at 595-620 is disordered; that stretch reads ELPSDTGPHAEYPGDADETDPTESTS. A helical membrane pass occupies residues 666-686; sequence VLQLLLLAPIVLILVGQLALF. Topologically, residues 687–702 are vacuolar; that stretch reads LTTSMSQVGSDGVSTF. A helical transmembrane segment spans residues 703 to 723; the sequence is IVYLACAVFTTLLFAPLFPFI. Residues 724–729 lie on the Cytoplasmic side of the membrane; the sequence is HRFTYH. A helical membrane pass occupies residues 730-750; sequence IPTFLFLVFVGTLIYNLVAFP. Topologically, residues 751–986 are vacuolar; sequence FSPANRLKMF…VEASHGITIQ (236 aa). Residues N797, N840, and N948 are each glycosylated (N-linked (GlcNAc...) asparagine).

Belongs to the peptidase M28 family. The cofactor is Zn(2+).

Its subcellular location is the vacuole membrane. May be involved in vacuolar sorting and osmoregulation. The sequence is that of Vacuolar membrane protease from Blastomyces gilchristii (strain SLH14081) (Blastomyces dermatitidis).